The chain runs to 6486 residues: Tyrocidine synthase 3 (6486 aa).

A domain 1 (asparagine-activating) region spans residues 466 to 1038 (IFELIAEQAS…VAELARFLSR (573 aa)). Carrier domains lie at 965 to 1040 (APQN…SRSE), 2002 to 2077 (APRN…AAAR), 3040 to 3115 (APTN…ATSG), 4075 to 4150 (AAQN…AESA), 5119 to 5194 (APRS…EETA), and 6162 to 6237 (APRN…THKR). S1000, S2037, S3075, S4110, S5154, and S6197 each carry O-(pantetheine 4'-phosphoryl)serine. The tract at residues 1521-2070 (YEEYALTYRE…FESPTIAGLA (550 aa)) is domain 2 (glutamine-activating). The domain 3 (tyrosine-activating) stretch occupies residues 2536-3113 (NKTLQALFEE…IKALAQYVAT (578 aa)). A domain 4 (valine-activating) region spans residues 3590 to 4149 (EHAAVVMDGQ…HELAAHIAES (560 aa)). Positions 4606-5203 (YPTDKTFQKL…AKGNVFSIEP (598 aa)) are domain 5 (ornithine-activating). Positions 5658–6245 (LHQLFEEQVD…KRFESRYGTA (588 aa)) are domain 6 (leucine-activating).

The protein belongs to the ATP-dependent AMP-binding enzyme family. As to quaternary structure, large multienzyme complex of TycA, TycB and TycC. It depends on pantetheine 4'-phosphate as a cofactor.

It participates in antibiotic biosynthesis; tyrocidine biosynthesis. Incorporates six amino acids (for tyrocidine A, Asn, Gln, Tyr, Val, Orn, and Leu) in their L-configuration into the peptide product. In Brevibacillus parabrevis, this protein is Tyrocidine synthase 3 (tycC).